Consider the following 348-residue polypeptide: Delta(6)-protoilludene synthase 18 (348 aa).

The Mg(2+) site is built by D87, N223, S227, and E231. The short motif at 87 to 91 (DEYTD) is the DDXXD motif element. Positions 223 to 231 (NDLVSYNRE) match the NSE/DTE motif motif. (2E,6E)-farnesyl diphosphate is bound by residues R311 and Y312.

Belongs to the terpene synthase family. Mg(2+) serves as cofactor.

It carries out the reaction (2E,6E)-farnesyl diphosphate = Delta(6)-protoilludene + diphosphate. Its function is as follows. Terpene cyclase that catalyzes the cyclization of farnesyl diphosphate (FPP) to delta(6)-protoilludene. The sequence is that of Delta(6)-protoilludene synthase 18 from Postia placenta (strain ATCC 44394 / Madison 698-R) (Brown rot fungus).